Here is a 294-residue protein sequence, read N- to C-terminus: 4-hydroxy-tetrahydrodipicolinate synthase (294 aa).

A pyruvate-binding site is contributed by Thr-45. The Proton donor/acceptor role is filled by Tyr-133. Catalysis depends on Lys-161, which acts as the Schiff-base intermediate with substrate. Residue Ile-203 participates in pyruvate binding.

The protein belongs to the DapA family. Homotetramer; dimer of dimers.

It is found in the cytoplasm. It catalyses the reaction L-aspartate 4-semialdehyde + pyruvate = (2S,4S)-4-hydroxy-2,3,4,5-tetrahydrodipicolinate + H2O + H(+). It functions in the pathway amino-acid biosynthesis; L-lysine biosynthesis via DAP pathway; (S)-tetrahydrodipicolinate from L-aspartate: step 3/4. Catalyzes the condensation of (S)-aspartate-beta-semialdehyde [(S)-ASA] and pyruvate to 4-hydroxy-tetrahydrodipicolinate (HTPA). The sequence is that of 4-hydroxy-tetrahydrodipicolinate synthase from Buchnera aphidicola subsp. Baizongia pistaciae (strain Bp).